The sequence spans 88 residues: Small ribosomal subunit protein bS20 (88 aa).

The protein belongs to the bacterial ribosomal protein bS20 family.

Functionally, binds directly to 16S ribosomal RNA. This is Small ribosomal subunit protein bS20 from Legionella pneumophila (strain Paris).